Reading from the N-terminus, the 344-residue chain is DNA-directed RNA polymerase subunit alpha (344 aa).

The tract at residues 1 to 239 is alpha N-terminal domain (alpha-NTD); the sequence is MADHWNKLTR…DQLQSFISFD (239 aa). The tract at residues 254 to 344 is alpha C-terminal domain (alpha-CTD); it reads VLPYDHNLLR…ENLSKQYSED (91 aa).

The protein belongs to the RNA polymerase alpha chain family. Homodimer. The RNAP catalytic core consists of 2 alpha, 1 beta, 1 beta' and 1 omega subunit. When a sigma factor is associated with the core the holoenzyme is formed, which can initiate transcription.

It carries out the reaction RNA(n) + a ribonucleoside 5'-triphosphate = RNA(n+1) + diphosphate. Its function is as follows. DNA-dependent RNA polymerase catalyzes the transcription of DNA into RNA using the four ribonucleoside triphosphates as substrates. The sequence is that of DNA-directed RNA polymerase subunit alpha from Anaplasma phagocytophilum (strain HZ).